Reading from the N-terminus, the 230-residue chain is dITP/XTP pyrophosphatase (230 aa).

Residue 7–12 (STNPGK) coordinates substrate. Glutamate 41 and aspartate 70 together coordinate Mg(2+). The active-site Proton acceptor is aspartate 70. Substrate is bound by residues serine 71, 181-184 (FGYD), lysine 205, and 210-211 (HR).

This sequence belongs to the HAM1 NTPase family. As to quaternary structure, homodimer. Mg(2+) serves as cofactor.

It catalyses the reaction XTP + H2O = XMP + diphosphate + H(+). It carries out the reaction dITP + H2O = dIMP + diphosphate + H(+). The catalysed reaction is ITP + H2O = IMP + diphosphate + H(+). Its function is as follows. Pyrophosphatase that catalyzes the hydrolysis of nucleoside triphosphates to their monophosphate derivatives, with a high preference for the non-canonical purine nucleotides XTP (xanthosine triphosphate), dITP (deoxyinosine triphosphate) and ITP. Seems to function as a house-cleaning enzyme that removes non-canonical purine nucleotides from the nucleotide pool, thus preventing their incorporation into DNA/RNA and avoiding chromosomal lesions. The sequence is that of dITP/XTP pyrophosphatase from Anaeromyxobacter sp. (strain Fw109-5).